Consider the following 380-residue polypeptide: Set1 complex component swd3 (380 aa).

WD repeat units lie at residues 52–91 (GHEK…LECT), 94–133 (GHYR…SVRC), 136–177 (GHTN…RMLP), 179–219 (HSEP…KTLV), 221–262 (PINV…RIFD), 291–330 (NDSS…IIDD), and 335–374 (SDDP…SKHE). Serine 379 carries the post-translational modification Phosphoserine.

Component of the Set1 complex composed of ash2, sdc1, set1, shg1, spp1, swd1, swd2 and swd3.

The protein resides in the nucleus. Its function is as follows. The Set1 complex specifically methylates 'Lys-4' of histone H3. The protein is Set1 complex component swd3 of Schizosaccharomyces pombe (strain 972 / ATCC 24843) (Fission yeast).